The chain runs to 146 residues: Large ribosomal subunit protein uL15 (146 aa).

The interval 1-56 is disordered; that stretch reads MKLHELRAAEGANKASKRVGRGTGSGLGKTSGKGQNGQNSRSGGGVRPGFEGGQMP. Gly residues-rich tracts occupy residues 21–35 and 42–52; these read RGTG…GKGQ and SGGGVRPGFEG.

This sequence belongs to the universal ribosomal protein uL15 family. In terms of assembly, part of the 50S ribosomal subunit.

Binds to the 23S rRNA. In Clostridium botulinum (strain Loch Maree / Type A3), this protein is Large ribosomal subunit protein uL15.